A 411-amino-acid chain; its full sequence is Indian hedgehog protein (411 aa).

An N-terminal signal peptide occupies residues 1-27; sequence MSPARLRPRLHFCLVLLLLLVVPAAWG. C28 carries N-palmitoyl cysteine lipidation. Ca(2+) contacts are provided by E94, E95, D100, T130, E131, D134, and D136. H145, D152, and H187 together coordinate Zn(2+). Residue G202 is the site of Cholesterol glycine ester attachment. Residue N282 is glycosylated (N-linked (GlcNAc...) asparagine).

This sequence belongs to the hedgehog family. In terms of assembly, multimer. As to quaternary structure, interacts with BOC and CDON. Interacts with PTCH1. Interacts with glypican GPC3. In terms of processing, cholesterylation is required for N-product targeting to lipid rafts and multimerization. Post-translationally, the C-terminal domain displays an autoproteolysis activity and a cholesterol transferase activity. Both activities result in the cleavage of the full-length protein and covalent attachment of a cholesterol moiety to the C-terminal of the newly generated N-product. The N-product is the active species in both local and long-range signaling, whereas the C-product is degraded in the endoplasmic reticulum. N-palmitoylation by HHAT of N-product is required for indian hedgehog protein N-product multimerization and full activity. In terms of tissue distribution, expressed in embryonic lung, and in adult kidney and liver.

Its subcellular location is the cell membrane. It localises to the endoplasmic reticulum membrane. It is found in the golgi apparatus membrane. The protein localises to the secreted. It catalyses the reaction glycyl-L-cysteinyl-[protein] + cholesterol + H(+) = [protein]-C-terminal glycyl cholesterol ester + N-terminal L-cysteinyl-[protein]. In terms of biological role, plays a role in embryonic morphogenesis; it is involved in the regulation of endochondral skeleton formation, and the development of retinal pigment epithelium (RPE), photoreceptors and periocular tissues. Its function is as follows. The C-terminal part of the indian hedgehog protein precursor displays an autoproteolysis and a cholesterol transferase activity. Both activities result in the cleavage of the full-length protein into two parts followed by the covalent attachment of a cholesterol moiety to the C-terminal of the newly generated N-product. Both activities occur in the endoplasmic reticulum. Plays a role in hedgehog paracrine signaling. Associated with the very-low-density lipoprotein (VLDL) particles to function as a circulating morphogen for endothelial cell integrity maintenance. The dually lipidated indian hedgehog protein N-product is a morphogen which is essential for a variety of patterning events during development. Binds to the patched (PTCH1) receptor, which functions in association with smoothened (SMO), to activate the transcription of target genes. Plays a role in morphogenesis of the skeleton by coordinating growth and differentiation of the endochondral skeleton. Positively regulates PTHLH expression during endochondral bone formation preventing chondrocyte hypertrophy. In contrast, participates in normal chondrocyte proliferation in a PTHLH-independent pathway. The sequence is that of Indian hedgehog protein from Homo sapiens (Human).